The primary structure comprises 285 residues: Probable endonuclease 4 (285 aa).

Zn(2+) contacts are provided by His69, His109, Glu145, Asp179, His182, His216, Asp229, His231, and Glu261.

The protein belongs to the AP endonuclease 2 family. Zn(2+) is required as a cofactor.

The catalysed reaction is Endonucleolytic cleavage to 5'-phosphooligonucleotide end-products.. Functionally, endonuclease IV plays a role in DNA repair. It cleaves phosphodiester bonds at apurinic or apyrimidinic (AP) sites, generating a 3'-hydroxyl group and a 5'-terminal sugar phosphate. In Salmonella agona (strain SL483), this protein is Probable endonuclease 4.